The following is a 205-amino-acid chain: Riboflavin kinase (205 aa).

The segment at 1-24 (MRPDTSRDPVAGPDSGPEPPFPIR) is disordered. Residues Thr44 and Asn46 each coordinate Mg(2+). The active-site Nucleophile is the Glu104.

This sequence belongs to the flavokinase family. It depends on Zn(2+) as a cofactor. Mg(2+) serves as cofactor.

The enzyme catalyses riboflavin + ATP = FMN + ADP + H(+). It participates in cofactor biosynthesis; FMN biosynthesis; FMN from riboflavin (ATP route): step 1/1. Functionally, catalyzes the phosphorylation of riboflavin (vitamin B2) to form flavin mononucleotide (FMN) coenzyme. This chain is Riboflavin kinase (fmn1), found in Aspergillus terreus (strain NIH 2624 / FGSC A1156).